We begin with the raw amino-acid sequence, 133 residues long: Small ribosomal subunit protein bS16 (133 aa).

Residues 99-133 (EKWQQNQTERRQKRLAVKTRRRQAKKAAEAKGAEA) are disordered. A compositionally biased stretch (basic residues) spans 109–123 (RQKRLAVKTRRRQAK). The segment covering 124 to 133 (KAAEAKGAEA) has biased composition (basic and acidic residues).

The protein belongs to the bacterial ribosomal protein bS16 family.

In Chlorobium limicola (strain DSM 245 / NBRC 103803 / 6330), this protein is Small ribosomal subunit protein bS16.